The following is a 363-amino-acid chain: Probable protein phosphatase 2C member 13, mitochondrial (363 aa).

The N-terminal 59 residues, 1–59 (MVCFASLRRALPLLLRATTTTTPRFLLPRALSGGVGGGAAVDARALLRGHSGWRGLRVA), are a transit peptide targeting the mitochondrion. Residues 111–357 (KCGYSSFRGK…DNITCIVVQF (247 aa)) form the PPM-type phosphatase domain. 4 residues coordinate Mn(2+): Asp-147, Gly-148, Asp-309, and Asp-348.

This sequence belongs to the PP2C family. It depends on Mg(2+) as a cofactor. Mn(2+) is required as a cofactor. Highly expressed in mature pollen grains.

The protein localises to the mitochondrion. It catalyses the reaction O-phospho-L-seryl-[protein] + H2O = L-seryl-[protein] + phosphate. The catalysed reaction is O-phospho-L-threonyl-[protein] + H2O = L-threonyl-[protein] + phosphate. In terms of biological role, probable protein phosphatase that may play a role as a mitochondrial signal transduction mediator in pollen germination. May function in retrograde signaling from the mitochondria to the nucleus. May be a downstream factor of cytoplasmic male sterility (CMS). CMS is caused by genetic incompatibility between nuclei and mitochondria within male reproductive organs. This is Probable protein phosphatase 2C member 13, mitochondrial from Oryza sativa subsp. japonica (Rice).